Reading from the N-terminus, the 34-residue chain is Photosystem II reaction center protein Y (34 aa).

The Lumenal segment spans residues 1–5 (DWRVL). Residues 6-22 (VVLLPVLLAAGWAVRNI) form a helical membrane-spanning segment. Residues 23–34 (LPYAVKQVQKLL) lie on the Cytoplasmic side of the membrane.

Belongs to the PsbY family. PSII is composed of 1 copy each of membrane proteins PsbA, PsbB, PsbC, PsbD, PsbE, PsbF, PsbH, PsbI, PsbJ, PsbK, PsbL, PsbM, PsbT, PsbX, PsbY, PsbZ, Psb30/Ycf12, peripheral proteins PsbO, CyanoQ (PsbQ), PsbU, PsbV and a large number of cofactors. It forms dimeric complexes. This protein is only loosely associated with PSII, and is not often found in crystals. Requires PSII binds multiple chlorophylls, carotenoids and specific lipids. as cofactor.

Its subcellular location is the cellular thylakoid membrane. In terms of biological role, loosely associated component of the core of photosystem II (PSII). PSII is a light-driven water plastoquinone oxidoreductase, using light energy to abstract electrons from H(2)O, generating a proton gradient subsequently used for ATP formation. This chain is Photosystem II reaction center protein Y, found in Thermostichus vulcanus (Synechococcus vulcanus).